The primary structure comprises 372 residues: Heat shock 70 kDa protein II (372 aa).

Belongs to the heat shock protein 70 family.

This is Heat shock 70 kDa protein II (HSP70II) from Paracentrotus lividus (Common sea urchin).